A 570-amino-acid polypeptide reads, in one-letter code: Frizzled-2 (570 aa).

Residues 1–28 (MRARSALPRSALPRLLLPLLLLPAAGPA) form the signal peptide. At 29-252 (QFHGEKGISI…HHHTRFARLW (224 aa)) the chain is on the extracellular side. Positions 39 to 158 (PDHGFCQPIS…HGAEQICVGQ (120 aa)) constitute an FZ domain. Disulfide bonds link cysteine 44/cysteine 105, cysteine 52/cysteine 98, cysteine 89/cysteine 126, cysteine 115/cysteine 155, and cysteine 119/cysteine 143. A glycan (N-linked (GlcNAc...) asparagine) is linked at asparagine 58. An N-linked (GlcNAc...) asparagine glycan is attached at asparagine 159. Residues 166 to 194 (PALLTTAPPSGLQPGAGGTPGGPGGGGAP) form a disordered region. Residues 179-193 (PGAGGTPGGPGGGGA) show a composition bias toward gly residues. The chain crosses the membrane as a helical span at residues 253–273 (ILTWSVLCCASTFFTVTTSLV). The Cytoplasmic portion of the chain corresponds to 274 to 284 (AMQRFRYPERP). A helical membrane pass occupies residues 285–305 (IIFLSGCYTMVSVAYIAGFVL). Topologically, residues 306–332 (QERVVCNERFSEDGYRTVGQGTKKEGC) are extracellular. A helical membrane pass occupies residues 333–353 (TILFMMLYFFSMASSIWWVIL). The Cytoplasmic portion of the chain corresponds to 354 to 375 (SLTWFLAAGMKWGHAAIEANSQ). A helical transmembrane segment spans residues 376–396 (YFHLAAWAVPAVKTITILAMG). The Extracellular segment spans residues 397 to 419 (QIDGDLLSGVCFVGLNRLDPLRG). Residues 420–440 (FVLAPLFVYLFIGTSFLLAGF) traverse the membrane as a helical segment. Residues 441–466 (VSLFRIRTIMKHDGTKTEPLERLMVR) are Cytoplasmic-facing. Residues 467 to 487 (IGVFSVLYTVPATIVIACYFY) traverse the membrane as a helical segment. The Extracellular segment spans residues 488-524 (EQAFREHWERSWVSQHCKSLAIPCPAHYTPRTSPDFT). A helical membrane pass occupies residues 525–545 (VYMIKYLMTLIVGITSGFWIW). The Cytoplasmic portion of the chain corresponds to 546 to 570 (SGKTLHSWRKFYTRLTNSRHGETTV). Positions 548-553 (KTLHSW) match the Lys-Thr-X-X-X-Trp motif, mediates interaction with the PDZ domain of Dvl family members motif. A PDZ-binding motif is present at residues 568 to 570 (TTV).

This sequence belongs to the G-protein coupled receptor Fz/Smo family. Post-translationally, ubiquitinated by ZNRF3, leading to its degradation by the proteasome. As to expression, widely expressed. Most abundant in kidney, liver, uterus, ovary and heart. Lower levels seen in brain and intestine. Extremely low in calvaria, mammary glands and testis.

It is found in the membrane. Its subcellular location is the cell membrane. Receptor for Wnt proteins. Most of frizzled receptors are coupled to the beta-catenin canonical signaling pathway, which leads to the activation of disheveled proteins, inhibition of GSK-3 kinase, nuclear accumulation of beta-catenin and activation of Wnt target genes. A second signaling pathway involving PKC and calcium fluxes has been seen for some family members, but it is not yet clear if it represents a distinct pathway or if it can be integrated in the canonical pathway, as PKC seems to be required for Wnt-mediated inactivation of GSK-3 kinase. Both pathways seem to involve interactions with G-proteins. May be involved in transduction and intercellular transmission of polarity information during tissue morphogenesis and/or in differentiated tissues. Activation by Wnt5A stimulates PKC activity via a G-protein-dependent mechanism. The protein is Frizzled-2 (Fzd2) of Rattus norvegicus (Rat).